Consider the following 923-residue polypeptide: RNA polymerase-associated protein RapA (923 aa).

One can recognise a Helicase ATP-binding domain in the interval Glu162 to Glu332. Asp175–Thr182 lines the ATP pocket. Residues Asp278–His281 carry the DEAH box motif. One can recognise a Helicase C-terminal domain in the interval Lys443–Ser597.

The protein belongs to the SNF2/RAD54 helicase family. RapA subfamily. As to quaternary structure, interacts with the RNAP. Has a higher affinity for the core RNAP than for the holoenzyme. Its ATPase activity is stimulated by binding to RNAP.

In terms of biological role, transcription regulator that activates transcription by stimulating RNA polymerase (RNAP) recycling in case of stress conditions such as supercoiled DNA or high salt concentrations. Probably acts by releasing the RNAP, when it is trapped or immobilized on tightly supercoiled DNA. Does not activate transcription on linear DNA. Probably not involved in DNA repair. The protein is RNA polymerase-associated protein RapA of Haemophilus influenzae (strain PittEE).